The sequence spans 720 residues: Phosphatase and actin regulator 4 (720 aa).

A disordered region spans residues 1–48 (MGQPRFSRPVHPAAAAEEVDHPPSDAGMGVDVLESGDTTPPTKRKSKF). The RPEL 1 repeat unit spans residues 74-99 (EVLERKISMRKPREELVKRGVLLEDP). Disordered regions lie at residues 294–417 (SGTG…GLPR), 454–568 (NDGF…DTLA), and 610–648 (RPTAEELEQRNILQPKNEADRQAEKREIKRRLTRKLSQR). Pro residues predominate over residues 346-368 (TYPPPSPSPPLPTHIPPEPPRMP). The segment covering 393-405 (KDFRSLEVSKRTA) has biased composition (basic and acidic residues). 3 stretches are compositionally biased toward acidic residues: residues 481–494 (DDEEEEEEDQEEEQ), 521–534 (EEQEGEEGMSDSDS), and 542–551 (DDEEDEEEDE). 2 RPEL repeats span residues 601-626 (TTLIRRLSQRPTAEELEQRNILQPKN) and 639-664 (RRLTRKLSQRPTVAELQARKILRFNE). Residues 626–636 (NEADRQAEKRE) show a composition bias toward basic and acidic residues. Residues 637-646 (IKRRLTRKLS) are compositionally biased toward basic residues.

Belongs to the phosphatase and actin regulator family. As to quaternary structure, binds PPP1CA and actin.

The protein localises to the cytoplasm. It is found in the cell projection. The protein resides in the lamellipodium. In terms of biological role, regulator of protein phosphatase 1 (PP1) required for neural tube and optic fissure closure, and enteric neural crest cell (ENCCs) migration during development. Acts as an activator of PP1. During neural tube closure, localizes to the ventral neural tube and activates PP1, leading to down-regulate cell proliferation within cranial neural tissue and the neural retina. Also acts as a regulator of migration of enteric neural crest cells (ENCCs) by activating PP1, leading to repression of the integrin signaling through the RHO/ROCK pathway. In Gallus gallus (Chicken), this protein is Phosphatase and actin regulator 4 (PHACTR4).